The chain runs to 296 residues: Transcription factor MYB72 (296 aa).

2 consecutive HTH myb-type domains span residues lysine 11 to leucine 63 and arginine 64 to leucine 118. 2 DNA-binding regions (H-T-H motif) span residues tryptophan 39–leucine 63 and tryptophan 91–leucine 114. Positions leucine 118–aspartate 144 are disordered. Basic and acidic residues predominate over residues glutamine 133–aspartate 144.

In terms of assembly, interacts with EIL3.

The protein localises to the nucleus. Involved in metal ions homeostasis, including iron ions (Fe) acquisition, via the regulation of NAS4 and NAS2 genes expression. Necessary for plant survival in alkaline soil where iron availability is greatly restricted. Involved in the up-regulation of several biosynthesis genes of secondary metabolites involved in iron uptake under conditions of iron deficiency. Triggers tolerance to nickel (Ni) and zinc (Zn) ions. Required in the roots during early signaling steps of rhizobacteria-mediated (e.g. P.fluorescens WCS417r) and beneficial fungi-mediated (e.g. T.asperellum T34) broad-spectrum induced systemic resistance (ISR) against several pathogens (e.g. P.syringae pv tomato, H.parasitica, P.cucumerina, A.brassicicola and B.cinerea) and implying enhanced callose deposition. Required for the induction of some genes (e.g. BGLU42) upon rhizobacteria-mediated ISR. The polypeptide is Transcription factor MYB72 (Arabidopsis thaliana (Mouse-ear cress)).